Consider the following 145-residue polypeptide: Peptide methionine sulfoxide reductase MsrB (145 aa).

The MsrB domain maps to 6–129 (KNERLKQLTD…NSAALRFIPV (124 aa)). The Nucleophile role is filled by cysteine 118.

It belongs to the MsrB Met sulfoxide reductase family.

It carries out the reaction L-methionyl-[protein] + [thioredoxin]-disulfide + H2O = L-methionyl-(R)-S-oxide-[protein] + [thioredoxin]-dithiol. This is Peptide methionine sulfoxide reductase MsrB from Listeria innocua serovar 6a (strain ATCC BAA-680 / CLIP 11262).